Reading from the N-terminus, the 518-residue chain is Probable inorganic carbon transporter subunit DabB (518 aa).

13 helical membrane-spanning segments follow: residues 3–23 (MQWV…LGSL), 37–57 (ISLL…FEWV), 65–85 (WVGV…IAFV), 114–134 (CVVT…WIAI), 165–185 (AEAC…TWFI), 207–227 (MLLA…GWLI), 242–262 (AGII…IVLS), 264–284 (MAQW…ALVM), 302–322 (MGLM…LHLV), 358–378 (WWFA…LADL), 379–399 (SGPY…IAER), 403–423 (LTSS…VVYT), and 442–462 (WKGD…YFLL).

Belongs to the inorganic carbon transporter (TC 9.A.2) DabB family. In terms of assembly, forms a complex with DabA.

The protein resides in the cell inner membrane. With respect to regulation, intracellular DIC accumulation is sensitive to CCCP (carbonyl cyanide-m-chlorophenylhydrazone) and DCCD (N,N-dicyclohexylcarbodiimide) and therefore likely driven by either proton gradient, ATP, or both. Part of an energy-coupled inorganic carbon pump involved in transport of dissolved inorganic carbon (DIC) with downstream gene dabA (Tcr_0854); has been suggested to be a proton-DIC symporter. The protein is Probable inorganic carbon transporter subunit DabB of Hydrogenovibrio crunogenus (strain DSM 25203 / XCL-2) (Thiomicrospira crunogena).